A 247-amino-acid chain; its full sequence is Small ribosomal subunit protein uS2 (247 aa).

It belongs to the universal ribosomal protein uS2 family.

This Pseudomonas syringae pv. syringae (strain B728a) protein is Small ribosomal subunit protein uS2.